Here is a 109-residue protein sequence, read N- to C-terminus: MKIKIYIYILLACYIASFLRLFINNNFIVSIIGSLLFGFFIDKRLSYSIEKIILSGFFSCFTSFSGFIYFLYKVFNQGDLMKFIIFCNLIIIINLLVMYFGFWISRKIT.

The next 3 membrane-spanning stretches (helical) occupy residues 21 to 41 (LFINNNFIVSIIGSLLFGFFI), 52 to 72 (IILSGFFSCFTSFSGFIYFLY), and 84 to 104 (IIFCNLIIIINLLVMYFGFWI).

It belongs to the fluoride channel Fluc/FEX (TC 1.A.43) family.

The protein localises to the cell inner membrane. The catalysed reaction is fluoride(in) = fluoride(out). Its function is as follows. Fluoride-specific ion channel. Important for reducing fluoride concentration in the cell, thus reducing its toxicity. The protein is Fluoride-specific ion channel FluC 1 of Prochlorococcus marinus (strain MIT 9312).